A 501-amino-acid chain; its full sequence is Glycerol kinase (501 aa).

Threonine 17 lines the ADP pocket. Residues threonine 17, threonine 18, and serine 19 each coordinate ATP. Threonine 17 is a sn-glycerol 3-phosphate binding site. Arginine 21 contributes to the ADP binding site. 4 residues coordinate sn-glycerol 3-phosphate: arginine 87, glutamate 88, tyrosine 139, and aspartate 243. Positions 87, 88, 139, 243, and 244 each coordinate glycerol. Residues threonine 265 and glycine 308 each coordinate ADP. Threonine 265, glycine 308, glutamine 312, and glycine 409 together coordinate ATP. ADP contacts are provided by glycine 409 and asparagine 413.

Belongs to the FGGY kinase family.

It catalyses the reaction glycerol + ATP = sn-glycerol 3-phosphate + ADP + H(+). It functions in the pathway polyol metabolism; glycerol degradation via glycerol kinase pathway; sn-glycerol 3-phosphate from glycerol: step 1/1. With respect to regulation, inhibited by fructose 1,6-bisphosphate (FBP). Its function is as follows. Key enzyme in the regulation of glycerol uptake and metabolism. Catalyzes the phosphorylation of glycerol to yield sn-glycerol 3-phosphate. The polypeptide is Glycerol kinase (Pseudomonas savastanoi pv. phaseolicola (strain 1448A / Race 6) (Pseudomonas syringae pv. phaseolicola (strain 1448A / Race 6))).